A 453-amino-acid polypeptide reads, in one-letter code: Armadillo repeat-containing X-linked protein 1 (453 aa).

Residues 1–6 (MGRTRE) are Mitochondrial intermembrane-facing. 2 mitochondrion outer membrane (MOM)-targeting sequence regions span residues 1–6 (MGRTRE) and 26–36 (RLAWGRDENEK). A helical; Signal-anchor membrane pass occupies residues 7 to 29 (AGCVAAGVVIGAGACYCVYRLAW). Over 30–453 (GRDENEKIWD…VKVLKVLTKL (424 aa)) the chain is Cytoplasmic. A disordered region spans residues 140-182 (PSLPCPGGRGGGCHPTRSGSRAGGRASGKSKGKARSKSTRAPA). Residues 167 to 177 (GKSKGKARSKS) are compositionally biased toward basic residues. 4 ARM repeats span residues 195 to 235 (PYKI…NNAA), 237 to 276 (SFNQ…NLSV), 358 to 398 (PAMT…NIND), and 415 to 453 (SSLF…LTKL).

Belongs to the eutherian X-chromosome-specific Armcx family. In terms of assembly, interacts with MIRO1.

The protein resides in the mitochondrion. It localises to the mitochondrion outer membrane. In terms of biological role, regulates mitochondrial transport during axon regeneration. Increases the proportion of motile mitochondria by recruiting stationary mitochondria into the motile pool. Enhances mitochondria movement and neurite growth in both adult axons and embryonic neurons. Promotes neuronal survival and axon regeneration after nerve injury. May link mitochondria to the Trak1-kinesin motor complex via its interaction with MIRO1. The sequence is that of Armadillo repeat-containing X-linked protein 1 (ARMCX1) from Pongo abelii (Sumatran orangutan).